A 242-amino-acid polypeptide reads, in one-letter code: Type III pantothenate kinase (242 aa).

Residue Asp-5–Lys-12 participates in ATP binding. Substrate-binding positions include Tyr-94 and Gly-100 to Arg-103. Asp-102 serves as the catalytic Proton acceptor. Thr-124 contributes to the ATP binding site. Residue Thr-175 participates in substrate binding.

It belongs to the type III pantothenate kinase family. As to quaternary structure, homodimer. Requires NH4(+) as cofactor. K(+) is required as a cofactor.

The protein localises to the cytoplasm. It catalyses the reaction (R)-pantothenate + ATP = (R)-4'-phosphopantothenate + ADP + H(+). Its pathway is cofactor biosynthesis; coenzyme A biosynthesis; CoA from (R)-pantothenate: step 1/5. Catalyzes the phosphorylation of pantothenate (Pan), the first step in CoA biosynthesis. The protein is Type III pantothenate kinase of Psychrobacter arcticus (strain DSM 17307 / VKM B-2377 / 273-4).